A 60-amino-acid chain; its full sequence is Metallothionein (60 aa).

Met-1 is modified (N-acetylmethionine). The interval 1–28 (MDPCECSKTGTCNCGGSCTCKNCSCTTC) is beta. Residues Cys-4, Cys-6, Cys-12, Cys-14, Cys-18, Cys-20, Cys-23, Cys-25, Cys-28, Cys-32, Cys-33, Cys-35, Cys-36, Cys-40, Cys-43, Cys-47, Cys-49, Cys-54, Cys-58, and Cys-59 each coordinate a divalent metal cation. The tract at residues 29 to 60 (TKSCCPCCPSGCPKCASGCVCKGKTCDTTCCQ) is alpha.

It belongs to the metallothionein superfamily. Type 1 family.

Functionally, metallothioneins have a high content of cysteine residues that bind various heavy metals. In Pseudopleuronectes americanus (Winter flounder), this protein is Metallothionein (mt).